A 117-amino-acid polypeptide reads, in one-letter code: Synaptobrevin homolog 1 (117 aa).

Residues 1 to 30 (MSSSTPFDPYALSEHDEERPQNVQSKSRTA) are disordered. Over 1–94 (MSSSTPFDPY…MWYKDLKMKM (94 aa)) the chain is Cytoplasmic. A v-SNARE coiled-coil homology domain is found at 28–88 (RTAELQAEID…NRVRKAMWYK (61 aa)). Residue Lys-63 forms a Glycyl lysine isopeptide (Lys-Gly) (interchain with G-Cter in ubiquitin) linkage. Cys-95 carries S-palmitoyl cysteine lipidation. Residues 95–111 (CLALVIIILLVVIIVPI) traverse the membrane as a helical; Anchor for type IV membrane protein segment. Residues 112–117 (AVHFSR) are Vesicular-facing.

It belongs to the synaptobrevin family. Palmitoylated by SWF1.

It is found in the endomembrane system. In terms of biological role, SNC1 and SNC2 are vesicle-targeting proteins essential for normal secretory traffic between the Golgi and the plasma membrane. They may also be involved in vesicle fusion. The chain is Synaptobrevin homolog 1 (SNC1) from Saccharomyces cerevisiae (strain ATCC 204508 / S288c) (Baker's yeast).